Consider the following 126-residue polypeptide: SPbeta prophage-derived uncharacterized protein YorC (126 aa).

The polypeptide is SPbeta prophage-derived uncharacterized protein YorC (yorC) (Bacillus subtilis (strain 168)).